The primary structure comprises 204 residues: Redox-sensing transcriptional repressor Rex 2 (204 aa).

The H-T-H motif DNA-binding region spans 17–53; sequence MYRKVLEATKKPYISSDEIARFLEINPDLVRKDFSYL.

This sequence belongs to the transcriptional regulatory Rex family. Homodimer.

It localises to the cytoplasm. Modulates transcription in response to changes in cellular NADH/NAD(+) redox state. The protein is Redox-sensing transcriptional repressor Rex 2 (rex2) of Thermotoga maritima (strain ATCC 43589 / DSM 3109 / JCM 10099 / NBRC 100826 / MSB8).